The following is a 145-amino-acid chain: UI (145 aa).

An N-terminal signal peptide occupies residues 1-22; the sequence is MKPVPLVLLITSVLLTTHIPLS. Valine 143 carries the valine amide modification.

The protein belongs to the sauvagine/corticotropin-releasing factor/urotensin I family.

It is found in the secreted. Urotensin is found in the teleost caudal neurosecretory system. It has a suggested role in osmoregulation and as a corticotropin-releasing factor. The non-hormonal portion of this precursor may be a urotensin binding protein, urophysin. The polypeptide is UI (Carassius auratus (Goldfish)).